We begin with the raw amino-acid sequence, 1075 residues long: DNA-directed RNA polymerase subunit beta (1075 aa).

This sequence belongs to the RNA polymerase beta chain family. As to quaternary structure, in plastids the minimal PEP RNA polymerase catalytic core is composed of four subunits: alpha, beta, beta', and beta''. When a (nuclear-encoded) sigma factor is associated with the core the holoenzyme is formed, which can initiate transcription.

It localises to the plastid. Its subcellular location is the chloroplast. The catalysed reaction is RNA(n) + a ribonucleoside 5'-triphosphate = RNA(n+1) + diphosphate. DNA-dependent RNA polymerase catalyzes the transcription of DNA into RNA using the four ribonucleoside triphosphates as substrates. The chain is DNA-directed RNA polymerase subunit beta from Pinus thunbergii (Japanese black pine).